The primary structure comprises 406 residues: Argininosuccinate synthase (406 aa).

ATP is bound by residues 12–20 (AYSGGLDTS) and Ala39. L-citrulline contacts are provided by Tyr90 and Ser95. Gly120 provides a ligand contact to ATP. Residues Thr122, Asn126, and Asp127 each coordinate L-aspartate. Residue Asn126 coordinates L-citrulline. L-citrulline contacts are provided by Arg130, Ser179, Ser188, Glu264, and Tyr276.

Belongs to the argininosuccinate synthase family. Type 1 subfamily. In terms of assembly, homotetramer.

The protein localises to the cytoplasm. The enzyme catalyses L-citrulline + L-aspartate + ATP = 2-(N(omega)-L-arginino)succinate + AMP + diphosphate + H(+). It participates in amino-acid biosynthesis; L-arginine biosynthesis; L-arginine from L-ornithine and carbamoyl phosphate: step 2/3. The protein is Argininosuccinate synthase of Citrifermentans bemidjiense (strain ATCC BAA-1014 / DSM 16622 / JCM 12645 / Bem) (Geobacter bemidjiensis).